The chain runs to 391 residues: Histidinol-phosphate aminotransferase (391 aa).

N6-(pyridoxal phosphate)lysine is present on Lys248.

Belongs to the class-II pyridoxal-phosphate-dependent aminotransferase family. Histidinol-phosphate aminotransferase subfamily. Homodimer. Pyridoxal 5'-phosphate serves as cofactor.

The catalysed reaction is L-histidinol phosphate + 2-oxoglutarate = 3-(imidazol-4-yl)-2-oxopropyl phosphate + L-glutamate. Its pathway is amino-acid biosynthesis; L-histidine biosynthesis; L-histidine from 5-phospho-alpha-D-ribose 1-diphosphate: step 7/9. This Shewanella oneidensis (strain ATCC 700550 / JCM 31522 / CIP 106686 / LMG 19005 / NCIMB 14063 / MR-1) protein is Histidinol-phosphate aminotransferase.